A 44-amino-acid polypeptide reads, in one-letter code: Small, acid-soluble spore protein P (44 aa).

Residues 1–44 (MSQTMSKNNREAKEKKGQPEPLSGSHKVKNRNHSRQKHHAHHDM) form a disordered region. A compositionally biased stretch (basic and acidic residues) spans 8–18 (NNREAKEKKGQ). Positions 26-44 (HKVKNRNHSRQKHHAHHDM) are enriched in basic residues.

The protein belongs to the SspP family.

The protein localises to the spore core. The protein is Small, acid-soluble spore protein P of Bacillus cereus (strain ATCC 10987 / NRS 248).